Consider the following 505-residue polypeptide: Deoxyguanosinetriphosphate triphosphohydrolase (505 aa).

The HD domain occupies 66 to 273 (RLTHSLEVQQ…MEAADDISYC (208 aa)).

This sequence belongs to the dGTPase family. Type 1 subfamily. In terms of assembly, homotetramer. Requires Mg(2+) as cofactor.

It catalyses the reaction dGTP + H2O = 2'-deoxyguanosine + triphosphate + H(+). In terms of biological role, dGTPase preferentially hydrolyzes dGTP over the other canonical NTPs. The protein is Deoxyguanosinetriphosphate triphosphohydrolase of Escherichia fergusonii (strain ATCC 35469 / DSM 13698 / CCUG 18766 / IAM 14443 / JCM 21226 / LMG 7866 / NBRC 102419 / NCTC 12128 / CDC 0568-73).